The chain runs to 301 residues: Ribosomal protein L11 methyltransferase (301 aa).

S-adenosyl-L-methionine-binding residues include Thr152, Gly173, Asp195, and Asn236.

It belongs to the methyltransferase superfamily. PrmA family.

The protein localises to the cytoplasm. It carries out the reaction L-lysyl-[protein] + 3 S-adenosyl-L-methionine = N(6),N(6),N(6)-trimethyl-L-lysyl-[protein] + 3 S-adenosyl-L-homocysteine + 3 H(+). Its function is as follows. Methylates ribosomal protein L11. This chain is Ribosomal protein L11 methyltransferase, found in Dictyoglomus thermophilum (strain ATCC 35947 / DSM 3960 / H-6-12).